We begin with the raw amino-acid sequence, 102 residues long: Large ribosomal subunit protein bL21 (102 aa).

This sequence belongs to the bacterial ribosomal protein bL21 family. In terms of assembly, part of the 50S ribosomal subunit. Contacts protein L20.

This protein binds to 23S rRNA in the presence of protein L20. The sequence is that of Large ribosomal subunit protein bL21 from Bifidobacterium animalis subsp. lactis (strain AD011).